We begin with the raw amino-acid sequence, 869 residues long: Dynamin-3 (869 aa).

The Dynamin-type G domain occupies 28 to 294 (LLELPQIAVV…LTNHIRDTLP (267 aa)). Residues 38-45 (GGQSAGKS) form a G1 motif region. Residue 38–46 (GGQSAGKSS) participates in GTP binding. Residues 64 to 66 (VTR) form a G2 motif region. Residues 136 to 139 (DLPG) form a G3 motif region. Residues 205-208 (TKLD) form a G4 motif region. 205–211 (TKLDLMD) contributes to the GTP binding site. Residue Tyr231 is modified to Phosphotyrosine. The tract at residues 235–238 (VNRS) is G5 motif. 236–239 (NRSQ) contacts GTP. Lys299 carries the post-translational modification N6-acetyllysine. The 107-residue stretch at 515-621 (QGTNLPPSRQ…ACDSQEDVDS (107 aa)) folds into the PH domain. Tyr603 is modified (phosphotyrosine). The residue at position 604 (Lys604) is an N6-acetyllysine. Residues 659–750 (VETIRNLVDS…IIGDISTATV (92 aa)) enclose the GED domain. The disordered stretch occupies residues 747-869 (TATVSTPAPP…IRPLESSLLD (123 aa)). A phosphoserine mark is found at Ser769 and Ser773. Composition is skewed to pro residues over residues 797–822 (PAIP…PPFP) and 832–855 (PQVP…PSPT). Ser853 is modified (phosphoserine).

Belongs to the TRAFAC class dynamin-like GTPase superfamily. Dynamin/Fzo/YdjA family.

It localises to the cytoplasm. The protein localises to the cytoskeleton. It catalyses the reaction GTP + H2O = GDP + phosphate + H(+). Functionally, microtubule-associated force-producing protein involved in producing microtubule bundles and able to bind and hydrolyze GTP. Most probably involved in vesicular trafficking processes, in particular endocytosis. This is Dynamin-3 (DNM3) from Homo sapiens (Human).